The sequence spans 1090 residues: Protein transport protein Sec24A (1090 aa).

Disordered stretches follow at residues 1-260 (MAQP…AHNT) and 272-325 (TPQL…TQTP). Low complexity predominate over residues 8–28 (AARGAAASLQAQNGAASASGS). Composition is skewed to polar residues over residues 29 to 55 (PYTNGPVHNTLMSPQVSSSQGYDSQPP), 138 to 151 (WQYNYPSTGPQTNH), and 162 to 184 (GNPNLTADHQYVSSGDPALQTSF). Residues 194–236 (QNPPLPPTFQPGAPPGPPPAGGPPPSRGPAPQKTPPRAAPPPS) show a composition bias toward pro residues. Composition is skewed to polar residues over residues 237–258 (FNSAVNQEGITSNANNGSTAAH), 274–286 (QLVNQNPKTSRSV), and 313–325 (SYPSGPQAFTQTP). 4 residues coordinate Zn(2+): cysteine 428, cysteine 431, cysteine 449, and cysteine 452. The interval 428–452 (CRSCRTYINPFVNFLDQRRWKCNLC) is zinc finger-like. One copy of the Gelsolin-like repeat lies at 963 to 1036 (PQPPILQLSV…PESARIAAFI (74 aa)).

This sequence belongs to the SEC23/SEC24 family. SEC24 subfamily. In terms of assembly, COPII is composed of at least five proteins: the Sec23/24 complex, the Sec13/31 complex and Sar1. Interacts with TMED2. Interacts (as part of the Sec23/24 complex) with SEC22B; recruits SEC22B into COPII-coated vesicles for its transport from the endoplasmic reticulum to the Golgi. Interacts with STING1; promoting STING1 translocation to COPII vesicles in a STEEP1-dependent manner. Interacts with TMEM39A. Interacts with SACM1L; this interaction is reduced in the absence of TMEM39A. Interacts with kinase FAM20C; transport of FAM20C from the endoplasmic reticulum to the Golgi is likely to be mediated by COPII vesicles.

The protein resides in the cytoplasmic vesicle. The protein localises to the COPII-coated vesicle membrane. It is found in the endoplasmic reticulum membrane. Its subcellular location is the cytoplasm. It localises to the cytosol. Component of the coat protein complex II (COPII) which promotes the formation of transport vesicles from the endoplasmic reticulum (ER). The coat has two main functions, the physical deformation of the endoplasmic reticulum membrane into vesicles and the selection of cargo molecules for their transport to the Golgi complex. Plays a central role in cargo selection within the COPII complex and together with SEC24B may have a different specificity compared to SEC24C and SEC24D. May package preferentially cargos with cytoplasmic DxE or LxxLE motifs and may also recognize conformational epitopes. This is Protein transport protein Sec24A from Mus musculus (Mouse).